We begin with the raw amino-acid sequence, 751 residues long: Protein CLMP1 (751 aa).

Residues 1–11 show a composition bias toward basic residues; sequence MGKSGGRKKKS. A disordered region spans residues 1–33; it reads MGKSGGRKKKSGGSNSNSSQVNSSETSGLSKPS. Residues 12-28 show a composition bias toward low complexity; sequence GGSNSNSSQVNSSETSG. 3 TPR repeats span residues 51–84, 89–124, and 125–158; these read AHEL…IPKS, AVFH…QPGF, and TRAL…DPNH. In terms of domain architecture, PB1 spans 290-382; the sequence is WRPLKFVYDH…GMLRLHVVDV (93 aa). Residues 386-443 form a disordered region; the sequence is QEPMLLEEEEEEVEEKPVIEEVISSPTESLSETEINTEKTDKEVEKEKASSSEDPETK. The segment covering 390 to 399 has biased composition (acidic residues); the sequence is LLEEEEEEVE. Positions 409–419 are enriched in polar residues; it reads SSPTESLSETE. Residues 421 to 443 show a composition bias toward basic and acidic residues; sequence NTEKTDKEVEKEKASSSEDPETK. 3 TPR repeats span residues 434-468, 481-514, and 536-570; these read ASSS…DPDA, SEAL…AFFN, and EVVA…KPDF. Over residues 630 to 648 the composition is skewed to basic and acidic residues; that stretch reads EQRMDDLKNPNSNKKEEVS. The segment at 630 to 663 is disordered; that stretch reads EQRMDDLKNPNSNKKEEVSKRRKKQGGDGNEEVS.

As to quaternary structure, interacts with myosin XI-K. In terms of tissue distribution, expressed in roots, stems, leaves, apex, flowers and seeds. Detected throughout the petiole in juvenile and young leaves, but restricted to the petiole midvein in older leaves. Expressed in hydathodes, at the base of the trichome, in the vascular cylinder of primary root and lateral root, in emerging lateral root primordia, in pollen and in developing embryos, but not in mature embryos.

The protein localises to the cytoplasm. In terms of biological role, required for plastid separation and partitioning during cell division. Not involved in plastid constriction or in the organization of cytoplasmic actin cables. Contributes to polar growth of root hairs. The chain is Protein CLMP1 from Arabidopsis thaliana (Mouse-ear cress).